Here is a 570-residue protein sequence, read N- to C-terminus: Urease subunit alpha (570 aa).

One can recognise a Urease domain in the interval 133–570 (GGIDNHIHYI…LPLAQLYNLF (438 aa)). 3 residues coordinate Ni(2+): His-138, His-140, and Lys-221. Lys-221 is modified (N6-carboxylysine). His-223 provides a ligand contact to substrate. Positions 250 and 276 each coordinate Ni(2+). The active-site Proton donor is His-324. Residue Asp-364 participates in Ni(2+) binding.

It belongs to the metallo-dependent hydrolases superfamily. Urease alpha subunit family. As to quaternary structure, heterotrimer of UreA (gamma), UreB (beta) and UreC (alpha) subunits. Three heterotrimers associate to form the active enzyme. It depends on Ni cation as a cofactor. Carboxylation allows a single lysine to coordinate two nickel ions.

The protein resides in the cytoplasm. It carries out the reaction urea + 2 H2O + H(+) = hydrogencarbonate + 2 NH4(+). Its pathway is nitrogen metabolism; urea degradation; CO(2) and NH(3) from urea (urease route): step 1/1. The protein is Urease subunit alpha of Cytophaga hutchinsonii (strain ATCC 33406 / DSM 1761 / CIP 103989 / NBRC 15051 / NCIMB 9469 / D465).